Reading from the N-terminus, the 264-residue chain is Undecaprenyl-diphosphatase (264 aa).

Transmembrane regions (helical) follow at residues 7–27 (IVIPIIIGIIQGITEFFPVSS), 45–65 (TKILEIFVQLGSTISVFLFFY), 86–106 (IHVLISILPTMFLGLIFYNKI), 109–129 (LFNPTNVMYALILGGFFLIIA), 145–165 (INLVQSLIIGCFQTLCLYPGF), 186–206 (VNFSFIISIPLIAGASVLDLI), 215–235 (LNIPYLFSGFTISFIISFLLI), and 244–264 (KVSLTFFGIYRFLIAGIIYFI).

This sequence belongs to the UppP family.

It is found in the cell membrane. It carries out the reaction di-trans,octa-cis-undecaprenyl diphosphate + H2O = di-trans,octa-cis-undecaprenyl phosphate + phosphate + H(+). Catalyzes the dephosphorylation of undecaprenyl diphosphate (UPP). Confers resistance to bacitracin. The protein is Undecaprenyl-diphosphatase of Buchnera aphidicola subsp. Schizaphis graminum (strain Sg).